Reading from the N-terminus, the 420-residue chain is Acetyl-CoA acetyltransferase, mitochondrial (420 aa).

Residues 1–33 constitute a mitochondrion transit peptide; sequence MAFCGPRTAARLSHSTRALHYTHRGHVSQRTLN. Residue Cys119 is the Acyl-thioester intermediate of the active site. CoA-binding positions include Tyr212, 251–253, and Lys256; that span reads RVD. A K(+)-binding site is contributed by Tyr212. The K(+) site is built by Ala273, Ala274, and Ala276. Ser277 provides a ligand contact to CoA. Val374 is a binding site for K(+). The active-site Proton donor/acceptor is Cys406.

The protein belongs to the thiolase-like superfamily. Thiolase family. Homotetramer.

Its subcellular location is the mitochondrion. It catalyses the reaction 2 acetyl-CoA = acetoacetyl-CoA + CoA. The enzyme catalyses propanoyl-CoA + acetyl-CoA = 2-methyl-3-oxobutanoyl-CoA + CoA. The protein operates within lipid metabolism; fatty acid beta-oxidation. In terms of biological role, this is one of the enzymes that catalyzes the last step of the mitochondrial beta-oxidation pathway, an aerobic process breaking down fatty acids into acetyl-CoA. Using free coenzyme A/CoA, catalyzes the thiolytic cleavage of medium- to long-chain 3-oxoacyl-CoAs into acetyl-CoA and a fatty acyl-CoA shortened by two carbon atoms. The activity of the enzyme is reversible and it can also catalyze the condensation of two acetyl-CoA molecules into acetoacetyl-CoA. Thereby, it plays a major role in ketone body metabolism. In Xenopus tropicalis (Western clawed frog), this protein is Acetyl-CoA acetyltransferase, mitochondrial (acat1).